Reading from the N-terminus, the 469-residue chain is 3-isopropylmalate dehydratase large subunit (469 aa).

[4Fe-4S] cluster is bound by residues cysteine 347, cysteine 410, and cysteine 413.

Belongs to the aconitase/IPM isomerase family. LeuC type 1 subfamily. As to quaternary structure, heterodimer of LeuC and LeuD. It depends on [4Fe-4S] cluster as a cofactor.

It catalyses the reaction (2R,3S)-3-isopropylmalate = (2S)-2-isopropylmalate. It participates in amino-acid biosynthesis; L-leucine biosynthesis; L-leucine from 3-methyl-2-oxobutanoate: step 2/4. Functionally, catalyzes the isomerization between 2-isopropylmalate and 3-isopropylmalate, via the formation of 2-isopropylmaleate. The sequence is that of 3-isopropylmalate dehydratase large subunit from Burkholderia thailandensis (strain ATCC 700388 / DSM 13276 / CCUG 48851 / CIP 106301 / E264).